Here is a 30-residue protein sequence, read N- to C-terminus: Photosystem I reaction center subunit XII (30 aa).

Residues 7–26 form a helical membrane-spanning segment; the sequence is IFVALLFALVSAVLAIRLGT.

Belongs to the PsaM family.

The protein localises to the plastid. The protein resides in the chloroplast thylakoid membrane. This chain is Photosystem I reaction center subunit XII, found in Gracilaria tenuistipitata var. liui (Red alga).